Here is a 476-residue protein sequence, read N- to C-terminus: Cysteine--tRNA ligase (476 aa).

Cys-28 is a binding site for Zn(2+). The 'HIGH' region motif lies at 30-40 (VTTYDFCHIGH). Cys-215, His-241, and Glu-245 together coordinate Zn(2+). The short motif at 273 to 277 (KMSKS) is the 'KMSKS' region element. Lys-276 contributes to the ATP binding site.

Belongs to the class-I aminoacyl-tRNA synthetase family. As to quaternary structure, monomer. Zn(2+) serves as cofactor.

Its subcellular location is the cytoplasm. The enzyme catalyses tRNA(Cys) + L-cysteine + ATP = L-cysteinyl-tRNA(Cys) + AMP + diphosphate. The chain is Cysteine--tRNA ligase from Buchnera aphidicola subsp. Cinara cedri (strain Cc).